The following is a 92-amino-acid chain: MTRSVWKGPFVDGYLLKKADAALSSGRKDVIKTWSRRSTIMPQFVGLTFGVHNGHKHVPVLVSEDMVGMKFGEFAPTRNFPGHAADKKAKRK.

The protein belongs to the universal ribosomal protein uS19 family.

In terms of biological role, protein S19 forms a complex with S13 that binds strongly to the 16S ribosomal RNA. The protein is Small ribosomal subunit protein uS19 of Caulobacter vibrioides (strain ATCC 19089 / CIP 103742 / CB 15) (Caulobacter crescentus).